Here is a 77-residue protein sequence, read N- to C-terminus: RNA-binding protein Hfq (77 aa).

The region spanning 10–70 is the Sm domain; that stretch reads DIFLNSARKN…ITTVTPEKPI (61 aa).

It belongs to the Hfq family. Homohexamer.

Its function is as follows. RNA chaperone that binds small regulatory RNA (sRNAs) and mRNAs to facilitate mRNA translational regulation in response to envelope stress, environmental stress and changes in metabolite concentrations. Also binds with high specificity to tRNAs. The protein is RNA-binding protein Hfq of Clostridium botulinum (strain Eklund 17B / Type B).